A 963-amino-acid polypeptide reads, in one-letter code: Seizure 6-like protein (963 aa).

Residues 1–31 form the signal peptide; the sequence is MPVARPQAAGPDRISLFLVAFLLGSPAAAQA. Disordered regions lie at residues 28–63, 116–150, and 164–204; these read AAQA…GVTS, RPLA…TAPA, and LPHS…TTTS. Topologically, residues 32–897 are extracellular; it reads EDGGPEGEMH…ESSLEGGNMA (866 aa). Residues 47-59 show a composition bias toward low complexity; that stretch reads LLPSASLESSLEE. Positions 120–135 are enriched in polar residues; the sequence is TPTTLQRLGSPASATT. Over residues 191–204 the composition is skewed to low complexity; sequence TGSASEESQETTTS. A disulfide bridge links cysteine 221 with cysteine 248. The region spanning 221-329 is the CUB 1 domain; sequence CGVSFSDPEG…GTFQLHYQAF (109 aa). N-linked (GlcNAc...) asparagine glycans are attached at residues asparagine 251, asparagine 268, and asparagine 290. The 60-residue stretch at 331–390 folds into the Sushi 1 domain; it reads LSCPFPRRPDAGEVTVMDLHSGGVAHFHCHLGYELQGAKTLTCINASKPHWSSQEPVCSA. 3 cysteine pairs are disulfide-bonded: cysteine 333–cysteine 373, cysteine 359–cysteine 388, and cysteine 392–cysteine 419. 6 N-linked (GlcNAc...) asparagine glycosylation sites follow: asparagine 375, asparagine 398, asparagine 414, asparagine 454, asparagine 516, and asparagine 558. Residues 392-502 form the CUB 2 domain; it reads CGGAVHNATI…SAFNIRFEAF (111 aa). The region spanning 505–566 is the Sushi 2 domain; it reads GHCYEPYIQN…WNDTEPLCRA (62 aa). 3 cysteine pairs are disulfide-bonded: cysteine 507-cysteine 549, cysteine 534-cysteine 564, and cysteine 568-cysteine 594. The CUB 3 domain maps to 568–679; sequence CGGELSAVAG…QGFIMNYIEV (112 aa). N-linked (GlcNAc...) asparagine glycans are attached at residues asparagine 614 and asparagine 682. Sushi domains are found at residues 683 to 742, 744 to 807, and 811 to 872; these read DSCS…FCEK, MYCT…HCVS, and LACD…ICKV. Disulfide bonds link cysteine 685–cysteine 727, cysteine 713–cysteine 740, cysteine 746–cysteine 788, cysteine 774–cysteine 805, cysteine 813–cysteine 855, and cysteine 841–cysteine 870. Residues 898–918 traverse the membrane as a helical segment; the sequence is LAIFIPVLLISLLLGGAYIYV. Over 919–963 the chain is Cytoplasmic; the sequence is TRCRQYSSLRLPLMYSHPYSQITVETEFDNPIYETGETREYEVSI.

The protein belongs to the SEZ6 family. Expressed exclusively in the brain, predominantly in neurons. Wide expression in the gray matter of the brain with high levels in the olfactory bulb, anterior olfactory nuclei, hippocampal formation and cerebellar cortex. Detected diffusely and weakly in the white matter, such as the corpus callosum and cerebellar medulla. In the cerebellar cortex, intensely expressed in Purkinje cells and granule cells. Detected also in interneurons in the molecular layer.

The protein resides in the cell membrane. The protein localises to the endoplasmic reticulum membrane. Candidate tumor suppressor gene. May contribute to specialized endoplasmic reticulum functions in neurons. This chain is Seizure 6-like protein (Sez6l), found in Mus musculus (Mouse).